Reading from the N-terminus, the 691-residue chain is MARSPVEPSAGQPAKRAAWLRAELERANYAYYVLDQPDLPDAEYDRLFAELQQIEAEHPDLVTPDSPTQRVGGEVASGFTPVVHDTPMLSLNNGFSDDDVVAFDKRVADGLDKPTDLAGTVTEPVEYACELKFDGLAISLRYENGRFVQASTRGDGTTGEDVTENIRTVRSIPLTLKGKRVPRMLDVRGEVLMFRRDFARLNERQRAAGQREFANPRNAAAGSLRQLDSKITASRPLSFFAYGIGVLDGVEMPDTHSSLLDWYETLGLPVNRERAVVRGAAGLLEFFHSVGARRESLPYDIDGVVYKVNRRDEQDRLGFVSRAPRFALAHKFPAQEALTKLVAIDVQVGRTGAITPVARLEPVFVGGATVTNATLHNEDEVRRKDIRIGDTVIVRRAGDVIPEVVSAVFDRRPADAREFVMPTECPECGSRVERLPDEAIARCTGGLFCPAQRKQALWHFAQRRALDIDGLGEKIIDQLVEQNLVRTPADLFNLGFSTLVELDRFAEKSAQNLIDSLEKAKHTTLARFIYALGIRHVGESTAKDLAKHFGSLDPIMDASIDELLEVNDVGPIVAESIHQFFAEAHNRTVIEQLRAKGKVTWPEGPPAPRAPQGVLAGKTVVLTGTLPTLTREAAKEMLEAAGAKVAGSVSKKTDYVVAGADAGSKLAKAEELGIPVLDEAGMHKLLEGHAR.

Residues 41–45 (DAEYD), 90–91 (SL), and Glu130 each bind NAD(+). Residue Lys132 is the N6-AMP-lysine intermediate of the active site. The NAD(+) site is built by Arg153, Glu190, Lys307, and Lys331. Zn(2+) contacts are provided by Cys425, Cys428, Cys443, and Cys449. The 82-residue stretch at 610-691 (APQGVLAGKT…MHKLLEGHAR (82 aa)) folds into the BRCT domain.

The protein belongs to the NAD-dependent DNA ligase family. LigA subfamily. It depends on Mg(2+) as a cofactor. Requires Mn(2+) as cofactor.

The enzyme catalyses NAD(+) + (deoxyribonucleotide)n-3'-hydroxyl + 5'-phospho-(deoxyribonucleotide)m = (deoxyribonucleotide)n+m + AMP + beta-nicotinamide D-nucleotide.. Its function is as follows. DNA ligase that catalyzes the formation of phosphodiester linkages between 5'-phosphoryl and 3'-hydroxyl groups in double-stranded DNA using NAD as a coenzyme and as the energy source for the reaction. It is essential for DNA replication and repair of damaged DNA. This is DNA ligase from Burkholderia thailandensis (strain ATCC 700388 / DSM 13276 / CCUG 48851 / CIP 106301 / E264).